The chain runs to 205 residues: Ribonuclease HII (205 aa).

Residues 15 to 205 form the RNase H type-2 domain; that stretch reads SQVCGIDEAG…SFKLRKLGEK (191 aa). The a divalent metal cation site is built by aspartate 21, glutamate 22, and aspartate 117.

The protein belongs to the RNase HII family. Mn(2+) is required as a cofactor. Mg(2+) serves as cofactor.

The protein localises to the cytoplasm. The catalysed reaction is Endonucleolytic cleavage to 5'-phosphomonoester.. Endonuclease that specifically degrades the RNA of RNA-DNA hybrids. The protein is Ribonuclease HII of Chlorobaculum tepidum (strain ATCC 49652 / DSM 12025 / NBRC 103806 / TLS) (Chlorobium tepidum).